A 352-amino-acid polypeptide reads, in one-letter code: Selenide, water dikinase (352 aa).

Residue Cys-23 is part of the active site. Residues Lys-26 and 54–56 (SRD) contribute to the ATP site. Asp-57 is a Mg(2+) binding site. Residues Asp-74, Asp-97, and 145-147 (GHS) each bind ATP. Position 97 (Asp-97) interacts with Mg(2+). Asp-233 serves as a coordination point for Mg(2+).

This sequence belongs to the selenophosphate synthase 1 family. Class I subfamily. Homodimer. Requires Mg(2+) as cofactor.

The enzyme catalyses hydrogenselenide + ATP + H2O = selenophosphate + AMP + phosphate + 2 H(+). Its function is as follows. Synthesizes selenophosphate from selenide and ATP. The polypeptide is Selenide, water dikinase (Shewanella sp. (strain MR-7)).